The sequence spans 209 residues: Ion-translocating oxidoreductase complex subunit G (209 aa).

A helical transmembrane segment spans residues 9 to 29 (ATTLALFAASTTAVTAVVNML). At T175 the chain carries FMN phosphoryl threonine.

This sequence belongs to the RnfG family. The complex is composed of six subunits: RnfA, RnfB, RnfC, RnfD, RnfE and RnfG. FMN is required as a cofactor.

It is found in the cell inner membrane. Part of a membrane-bound complex that couples electron transfer with translocation of ions across the membrane. This chain is Ion-translocating oxidoreductase complex subunit G, found in Pectobacterium atrosepticum (strain SCRI 1043 / ATCC BAA-672) (Erwinia carotovora subsp. atroseptica).